The following is a 481-amino-acid chain: Arginine biosynthesis bifunctional protein ArgJ, chloroplastic (481 aa).

Threonine 225, lysine 251, threonine 262, glutamate 349, asparagine 476, and threonine 481 together coordinate substrate. Threonine 262 (nucleophile) is an active-site residue.

This sequence belongs to the ArgJ family. Heterodimer of an alpha and a beta chain.

It is found in the plastid. Its subcellular location is the chloroplast. The catalysed reaction is N(2)-acetyl-L-ornithine + L-glutamate = N-acetyl-L-glutamate + L-ornithine. It catalyses the reaction L-glutamate + acetyl-CoA = N-acetyl-L-glutamate + CoA + H(+). The protein operates within amino-acid biosynthesis; L-arginine biosynthesis; L-ornithine and N-acetyl-L-glutamate from L-glutamate and N(2)-acetyl-L-ornithine (cyclic): step 1/1. Its pathway is amino-acid biosynthesis; L-arginine biosynthesis; N(2)-acetyl-L-ornithine from L-glutamate: step 1/4. Functionally, catalyzes two activities which are involved in the cyclic version of arginine biosynthesis: the synthesis of acetylglutamate from glutamate and acetyl-CoA, and of ornithine by transacetylation between acetylornithine and glutamate. This chain is Arginine biosynthesis bifunctional protein ArgJ, chloroplastic, found in Populus trichocarpa (Western balsam poplar).